A 170-amino-acid polypeptide reads, in one-letter code: Acireductone dioxygenase (170 aa).

Fe(2+) contacts are provided by H99, H101, E105, and H144. 4 residues coordinate Ni(2+): H99, H101, E105, and H144.

It belongs to the acireductone dioxygenase (ARD) family. As to quaternary structure, monomer. Requires Fe(2+) as cofactor. Ni(2+) is required as a cofactor.

It catalyses the reaction 1,2-dihydroxy-5-(methylsulfanyl)pent-1-en-3-one + O2 = 3-(methylsulfanyl)propanoate + CO + formate + 2 H(+). The catalysed reaction is 1,2-dihydroxy-5-(methylsulfanyl)pent-1-en-3-one + O2 = 4-methylsulfanyl-2-oxobutanoate + formate + 2 H(+). It functions in the pathway amino-acid biosynthesis; L-methionine biosynthesis via salvage pathway; L-methionine from S-methyl-5-thio-alpha-D-ribose 1-phosphate: step 5/6. Its function is as follows. Catalyzes 2 different reactions between oxygen and the acireductone 1,2-dihydroxy-3-keto-5-methylthiopentene (DHK-MTPene) depending upon the metal bound in the active site. Fe-containing acireductone dioxygenase (Fe-ARD) produces formate and 2-keto-4-methylthiobutyrate (KMTB), the alpha-ketoacid precursor of methionine in the methionine recycle pathway. Ni-containing acireductone dioxygenase (Ni-ARD) produces methylthiopropionate, carbon monoxide and formate, and does not lie on the methionine recycle pathway. The polypeptide is Acireductone dioxygenase (Bacillus cytotoxicus (strain DSM 22905 / CIP 110041 / 391-98 / NVH 391-98)).